The sequence spans 238 residues: Hydroxyacylglutathione hydrolase (238 aa).

Zn(2+) is bound by residues H52, H54, D56, H57, H108, D125, and H163.

The protein belongs to the metallo-beta-lactamase superfamily. Glyoxalase II family. As to quaternary structure, monomer. Requires Zn(2+) as cofactor.

The enzyme catalyses an S-(2-hydroxyacyl)glutathione + H2O = a 2-hydroxy carboxylate + glutathione + H(+). It participates in secondary metabolite metabolism; methylglyoxal degradation; (R)-lactate from methylglyoxal: step 2/2. Functionally, thiolesterase that catalyzes the hydrolysis of S-D-lactoyl-glutathione to form glutathione and D-lactic acid. The chain is Hydroxyacylglutathione hydrolase from Haemophilus influenzae (strain ATCC 51907 / DSM 11121 / KW20 / Rd).